The primary structure comprises 286 residues: Bifunctional protein FolD (286 aa).

NADP(+) is bound by residues 160 to 162, Ser-189, and Thr-230; that span reads GRS.

This sequence belongs to the tetrahydrofolate dehydrogenase/cyclohydrolase family. Homodimer.

The enzyme catalyses (6R)-5,10-methylene-5,6,7,8-tetrahydrofolate + NADP(+) = (6R)-5,10-methenyltetrahydrofolate + NADPH. The catalysed reaction is (6R)-5,10-methenyltetrahydrofolate + H2O = (6R)-10-formyltetrahydrofolate + H(+). The protein operates within one-carbon metabolism; tetrahydrofolate interconversion. Catalyzes the oxidation of 5,10-methylenetetrahydrofolate to 5,10-methenyltetrahydrofolate and then the hydrolysis of 5,10-methenyltetrahydrofolate to 10-formyltetrahydrofolate. This chain is Bifunctional protein FolD, found in Chlamydia pneumoniae (Chlamydophila pneumoniae).